We begin with the raw amino-acid sequence, 338 residues long: MEMO1 family protein MHO1 (338 aa).

It belongs to the MEMO1 family.

Its subcellular location is the cytoplasm. It is found in the nucleus. Functionally, plays a role in haploid invasive growth under conditions of nutrient insufficiency, suggesting that the function of the MEMO1 family in cell motility/invasion is conserved across species. The sequence is that of MEMO1 family protein MHO1 from Saccharomyces cerevisiae (strain ATCC 204508 / S288c) (Baker's yeast).